Consider the following 428-residue polypeptide: Serine--tRNA ligase (428 aa).

235 to 237 lines the L-serine pocket; that stretch reads TAE. 266–268 is a binding site for ATP; that stretch reads RSE. Glu-289 contributes to the L-serine binding site. ATP is bound at residue 353–356; it reads EISS. Ser-389 serves as a coordination point for L-serine.

The protein belongs to the class-II aminoacyl-tRNA synthetase family. Type-1 seryl-tRNA synthetase subfamily. As to quaternary structure, homodimer. The tRNA molecule binds across the dimer.

The protein localises to the cytoplasm. It catalyses the reaction tRNA(Ser) + L-serine + ATP = L-seryl-tRNA(Ser) + AMP + diphosphate + H(+). It carries out the reaction tRNA(Sec) + L-serine + ATP = L-seryl-tRNA(Sec) + AMP + diphosphate + H(+). It participates in aminoacyl-tRNA biosynthesis; selenocysteinyl-tRNA(Sec) biosynthesis; L-seryl-tRNA(Sec) from L-serine and tRNA(Sec): step 1/1. Catalyzes the attachment of serine to tRNA(Ser). Is also able to aminoacylate tRNA(Sec) with serine, to form the misacylated tRNA L-seryl-tRNA(Sec), which will be further converted into selenocysteinyl-tRNA(Sec). The polypeptide is Serine--tRNA ligase (Shewanella frigidimarina (strain NCIMB 400)).